The chain runs to 258 residues: Fibroblast growth factor-binding protein 3 (258 aa).

Residues 1 to 26 form the signal peptide; sequence MTPPKLRASLSPSLLLLLSGCLLAAA. Disulfide bonds link Cys-59-Cys-80 and Cys-90-Cys-124. The segment at 146 to 231 is disordered; it reads RLVPRASPPA…GTGPDPDGLD (86 aa). Residues 186–197 are compositionally biased toward pro residues; it reads GTPPPQSAPPKE. A compositionally biased stretch (basic and acidic residues) spans 198–209; sequence NPSERKTNEGKR. Cys-241 and Cys-249 are oxidised to a cystine.

The protein belongs to the fibroblast growth factor-binding protein family. As to quaternary structure, interacts with FGF2.

The protein localises to the secreted. Heparin-binding protein which binds to FGF2, prevents binding of FGF2 to heparin and probably inhibits immobilization of FGF2 on extracellular matrix glycosaminoglycans, allowing its release and subsequent activation of FGFR signaling which leads to increased vascular permeability. This Homo sapiens (Human) protein is Fibroblast growth factor-binding protein 3 (FGFBP3).